A 554-amino-acid chain; its full sequence is Trimethyltridecatetraene synthase (554 aa).

A helical transmembrane segment spans residues 1–21 (MSAAVALAVILAVYVVLRYIS). Cys464 is a binding site for heme.

It belongs to the cytochrome P450 family. Requires heme as cofactor.

The protein resides in the membrane. It carries out the reaction (6E,10E)-geranyllinalool + reduced [NADPH--hemoprotein reductase] + O2 = (3E,7E)-4,8,12-trimethyltrideca 1,3,7,11-tetraene + but-3-en-2-one + oxidized [NADPH--hemoprotein reductase] + 2 H2O + H(+). It participates in secondary metabolite biosynthesis; terpenoid biosynthesis. Its function is as follows. Component of the volatile terpenes biosynthesis pathways. Converts mainly geranyllinalool to trimethyltridecatetraene (TMTT). This is Trimethyltridecatetraene synthase from Zea mays (Maize).